The sequence spans 182 residues: Doublesex- and mab-3-related transcription factor C1 (182 aa).

Thr15 is subject to Phosphoserine. A compositionally biased stretch (polar residues) spans 26–39 (AQVDTATQEESSQG). Disordered stretches follow at residues 26 to 48 (AQVD…QHPE) and 136 to 174 (QTRH…PSGH).

This sequence belongs to the DMRT family. As to expression, expressed in Sertoli cells in male testis.

The polypeptide is Doublesex- and mab-3-related transcription factor C1 (Dmrtc1) (Mus musculus (Mouse)).